The chain runs to 391 residues: 3-ketoacyl-CoA thiolase (391 aa).

Cysteine 95 (acyl-thioester intermediate) is an active-site residue. Active-site proton acceptor residues include histidine 347 and cysteine 377.

Belongs to the thiolase-like superfamily. Thiolase family. Heterotetramer of two alpha chains (FadB) and two beta chains (FadA).

The protein localises to the cytoplasm. It catalyses the reaction an acyl-CoA + acetyl-CoA = a 3-oxoacyl-CoA + CoA. Its pathway is lipid metabolism; fatty acid beta-oxidation. Catalyzes the final step of fatty acid oxidation in which acetyl-CoA is released and the CoA ester of a fatty acid two carbons shorter is formed. In Marinobacter nauticus (strain ATCC 700491 / DSM 11845 / VT8) (Marinobacter aquaeolei), this protein is 3-ketoacyl-CoA thiolase.